Reading from the N-terminus, the 146-residue chain is uncharacterized protein (146 aa).

Positions 1–137 constitute an HTH marR-type domain; sequence MLSQEFFNSF…TINVMNQIHK (137 aa).

This is an uncharacterized protein from Staphylococcus aureus (strain MW2).